Reading from the N-terminus, the 4114-residue chain is Ferrichrome siderophore peptide synthetase (4114 aa).

4 Carrier domains span residues 797 to 874, 1947 to 2021, 3020 to 3093, and 3574 to 3650; these read DPAT…QSSG, TDSE…IDKL, TQSE…MQSS, and QALS…SQTN. O-(pantetheine 4'-phosphoryl)serine occurs at positions 835, 1982, 3054, and 3611. Residues 4040 to 4061 are disordered; that stretch reads LDYSHHSQHSTHDRTPPSTPHV. Residues 4041–4054 are compositionally biased toward basic and acidic residues; sequence DYSHHSQHSTHDRT.

Belongs to the ATP-dependent AMP-binding enzyme family. It depends on pantetheine 4'-phosphate as a cofactor.

Its pathway is siderophore biosynthesis; ferrichrome biosynthesis. Multidomain peptide synthetase involved in ferrichrome biosynthesis. This is Ferrichrome siderophore peptide synthetase (SID2) from Mycosarcoma maydis (Corn smut fungus).